A 513-amino-acid polypeptide reads, in one-letter code: 5-aminolevulinate synthase, erythroid-specific, mitochondrial (513 aa).

The transit peptide at 1–18 (MAAFLRCPLLARHPPLAR) directs the protein to the mitochondrion. Position 98 (Arg98) interacts with succinyl-CoA. 2 residues coordinate pyridoxal 5'-phosphate: Cys190 and Phe191. Positions 212 and 231 each coordinate succinyl-CoA. Positions 264, 292, and 320 each coordinate pyridoxal 5'-phosphate. Lys323 is a catalytic residue. An N6-(pyridoxal phosphate)lysine modification is found at Lys323. Pyridoxal 5'-phosphate-binding residues include Thr352 and Thr353. Position 437 (Thr437) interacts with succinyl-CoA.

It belongs to the class-II pyridoxal-phosphate-dependent aminotransferase family. Homodimer. It depends on pyridoxal 5'-phosphate as a cofactor. In terms of tissue distribution, erythroid-specific.

Its subcellular location is the mitochondrion inner membrane. The catalysed reaction is succinyl-CoA + glycine + H(+) = 5-aminolevulinate + CO2 + CoA. It participates in porphyrin-containing compound metabolism; protoporphyrin-IX biosynthesis; 5-aminolevulinate from glycine: step 1/1. In terms of biological role, catalyzes the pyridoxal 5'-phosphate (PLP)-dependent condensation of succinyl-CoA and glycine to form aminolevulinic acid (ALA), with CoA and CO2 as by-products. Contributes significantly to heme formation during erythropoiesis. This is 5-aminolevulinate synthase, erythroid-specific, mitochondrial (ALAS2) from Gallus gallus (Chicken).